A 683-amino-acid polypeptide reads, in one-letter code: 1,4-alpha-glucan-branching enzyme (683 aa).

The (1,4-alpha-D-glucosyl)n site is built by Trp92 and Lys127. Residue Asp342 is the Nucleophile of the active site. The active-site Proton donor is Glu397.

Belongs to the glycosyl hydrolase 13 family. GlgB subfamily.

It is found in the cytoplasm. It carries out the reaction Transfers a segment of a (1-&gt;4)-alpha-D-glucan chain to a primary hydroxy group in a similar glucan chain.. The protein operates within glycan biosynthesis; glycogen biosynthesis. Its function is as follows. Glycogen-branching enzyme participates in the glycogen biosynthetic process along with glycogenin and glycogen synthase. Generates alpha-1,6-glucosidic branches from alpha-1,4-linked glucose chains, to increase solubility of the glycogen polymer. The polypeptide is 1,4-alpha-glucan-branching enzyme (GLC3) (Rhizophagus irregularis (strain DAOM 181602 / DAOM 197198 / MUCL 43194) (Arbuscular mycorrhizal fungus)).